We begin with the raw amino-acid sequence, 413 residues long: Arginine biosynthesis bifunctional protein ArgJ (413 aa).

The substrate site is built by Thr-160, Lys-186, Thr-197, Glu-284, Asn-408, and Ser-413. Thr-197 (nucleophile) is an active-site residue.

Belongs to the ArgJ family. As to quaternary structure, heterotetramer of two alpha and two beta chains.

It localises to the cytoplasm. It catalyses the reaction N(2)-acetyl-L-ornithine + L-glutamate = N-acetyl-L-glutamate + L-ornithine. The catalysed reaction is L-glutamate + acetyl-CoA = N-acetyl-L-glutamate + CoA + H(+). The protein operates within amino-acid biosynthesis; L-arginine biosynthesis; L-ornithine and N-acetyl-L-glutamate from L-glutamate and N(2)-acetyl-L-ornithine (cyclic): step 1/1. It participates in amino-acid biosynthesis; L-arginine biosynthesis; N(2)-acetyl-L-ornithine from L-glutamate: step 1/4. Catalyzes two activities which are involved in the cyclic version of arginine biosynthesis: the synthesis of N-acetylglutamate from glutamate and acetyl-CoA as the acetyl donor, and of ornithine by transacetylation between N(2)-acetylornithine and glutamate. The chain is Arginine biosynthesis bifunctional protein ArgJ from Burkholderia pseudomallei (strain 1710b).